The primary structure comprises 60 residues: DNA gyrase inhibitor YacG (60 aa).

Residues cysteine 15, cysteine 18, cysteine 30, and cysteine 34 each coordinate Zn(2+).

Belongs to the DNA gyrase inhibitor YacG family. Interacts with GyrB. It depends on Zn(2+) as a cofactor.

Functionally, inhibits all the catalytic activities of DNA gyrase by preventing its interaction with DNA. Acts by binding directly to the C-terminal domain of GyrB, which probably disrupts DNA binding by the gyrase. In Bradyrhizobium diazoefficiens (strain JCM 10833 / BCRC 13528 / IAM 13628 / NBRC 14792 / USDA 110), this protein is DNA gyrase inhibitor YacG.